A 1752-amino-acid chain; its full sequence is Gag-Pol polyprotein (1752 aa).

Gly-2 is lipidated: N-myristoyl glycine; by host. Residues 154–185 (AAQQQVLLLQREQQREQREKDIKKRDEKKKKL) adopt a coiled-coil conformation. Positions 168–178 (REQREKDIKKR) are enriched in basic and acidic residues. The segment at 168–222 (REQREKDIKKRDEKKKKLLPDTTQKVEQTDIGEASSSDASAQKPISTDNNPDLKV) is disordered. Polar residues predominate over residues 201–217 (ASSSDASAQKPISTDNN). A CCHC-type zinc finger spans residues 501–518 (NTCFFCKQPGHWKADCPN). The Peptidase A2 domain maps to 618-694 (IPMLVDTGAC…QTFHILGRDT (77 aa)). Catalysis depends on Asp-623, which acts as the Protease; shared with dimeric partner. The Reverse transcriptase domain occupies 793-977 (ENQGILIKCH…QEVVYLGQLL (185 aa)). Mg(2+) is bound by residues Asp-861, Asp-928, Asp-929, Asp-1231, Glu-1269, Asp-1290, Asp-1360, Asp-1493, and Asp-1550. The 147-residue stretch at 1222-1368 (PDPDMTLFSD…ADEAAKNAVF (147 aa)) folds into the RNase H type-1 domain. Residues 1482 to 1638 (LPSRPFAHLQ…SPHEIVMGRP (157 aa)) enclose the Integrase catalytic domain.

As to quaternary structure, homohexamer. Further associates as homomultimer. The virus core is composed of a lattice formed from hexagonal rings, each containing six capsid monomers. The protease is a homodimer, whose active site consists of two apposed aspartic acid residues. The reverse transcriptase is a monomer. Mg(2+) serves as cofactor. Post-translationally, specific enzymatic cleavages by the viral protease yield mature proteins. The protease is released by autocatalytic cleavage. The polyprotein is cleaved during and after budding, this process is termed maturation.

It localises to the host cell membrane. The protein resides in the virion. It carries out the reaction DNA(n) + a 2'-deoxyribonucleoside 5'-triphosphate = DNA(n+1) + diphosphate. The enzyme catalyses Endonucleolytic cleavage to 5'-phosphomonoester.. Functionally, targets Gag and gag-pol polyproteins to the plasma membrane via a multipartite membrane binding signal, that includes its myristoylated N-terminus. Also mediates nuclear localization of the pre-integration complex. Capsid protein p25 forms the spherical core of the virion that encapsulates the genomic RNA-nucleocapsid complex. Its function is as follows. Involved in the packaging and encapsidation of two copies of the genome. Binds with high affinity to conserved UCUG elements within the packaging signal, located near the 5'-end of the genome. This binding is dependent on genome dimerization. In terms of biological role, mediates proteolytic cleavages of Gag and Gag-Pol polyproteins during or shortly after the release of the virion from the plasma membrane. Cleavages take place as an ordered, step-wise cascade to yield mature proteins. This process is called maturation. Displays maximal activity during the budding process just prior to particle release from the cell. Functionally, is a multifunctional enzyme that converts the viral dimeric RNA genome into dsDNA in the cytoplasm, shortly after virus entry into the cell. This enzyme displays a DNA polymerase activity that can copy either DNA or RNA templates, and a ribonuclease H (RNase H) activity that cleaves the RNA strand of RNA-DNA heteroduplexes in a partially processive 3' to 5' endonucleasic mode. Conversion of viral genomic RNA into dsDNA requires many steps. A tRNA binds to the primer-binding site (PBS) situated at the 5' end of the viral RNA. RT uses the 3' end of the tRNA primer to perform a short round of RNA-dependent minus-strand DNA synthesis. The reading proceeds through the U5 region and ends after the repeated (R) region which is present at both ends of viral RNA. The portion of the RNA-DNA heteroduplex is digested by the RNase H, resulting in a ssDNA product attached to the tRNA primer. This ssDNA/tRNA hybridizes with the identical R region situated at the 3' end of viral RNA. This template exchange, known as minus-strand DNA strong stop transfer, can be either intra- or intermolecular. RT uses the 3' end of this newly synthesized short ssDNA to perform the RNA-dependent minus-strand DNA synthesis of the whole template. RNase H digests the RNA template except for a polypurine tract (PPT) situated at the 5' end of the genome. It is not clear if both polymerase and RNase H activities are simultaneous. RNase H probably can proceed both in a polymerase-dependent (RNA cut into small fragments by the same RT performing DNA synthesis) and a polymerase-independent mode (cleavage of remaining RNA fragments by free RTs). Secondly, RT performs DNA-directed plus-strand DNA synthesis using the PPT that has not been removed by RNase H as primers. PPT and tRNA primers are then removed by RNase H. The 3' and 5' ssDNA PBS regions hybridize to form a circular dsDNA intermediate. Strand displacement synthesis by RT to the PBS and PPT ends produces a blunt ended, linear dsDNA copy of the viral genome that includes long terminal repeats (LTRs) at both ends. Catalyzes viral DNA integration into the host chromosome, by performing a series of DNA cutting and joining reactions. This enzyme activity takes place after virion entry into a cell and reverse transcription of the RNA genome in dsDNA. The first step in the integration process is 3' processing. This step requires a complex comprising the viral genome, matrix protein and integrase. This complex is called the pre-integration complex (PIC). The integrase protein removes 2 nucleotides from each 3' end of the viral DNA, leaving recessed CA OH's at the 3' ends. In the second step that requires cell division, the PIC enters cell nucleus. In the third step, termed strand transfer, the integrase protein joins the previously processed 3' ends to the 5' ends of strands of target cellular DNA at the site of integration. The last step is viral DNA integration into host chromosome. Its function is as follows. Plays a role in budding and is processed by the viral protease during virion maturation outside the cell. The sequence is that of Gag-Pol polyprotein (gag-pol) from Walleye dermal sarcoma virus (WDSV).